The following is a 985-amino-acid chain: Phosphoenolpyruvate carboxylase (985 aa).

Over residues methionine 1–arginine 17 the composition is skewed to low complexity. Residues methionine 1–aspartate 55 form a disordered region. Active-site residues include histidine 193 and lysine 634.

It belongs to the PEPCase type 1 family. The cofactor is Mg(2+).

It catalyses the reaction oxaloacetate + phosphate = phosphoenolpyruvate + hydrogencarbonate. Its function is as follows. Forms oxaloacetate, a four-carbon dicarboxylic acid source for the tricarboxylic acid cycle. This Ralstonia nicotianae (strain ATCC BAA-1114 / GMI1000) (Ralstonia solanacearum) protein is Phosphoenolpyruvate carboxylase.